The primary structure comprises 673 residues: DNA ligase (673 aa).

NAD(+) contacts are provided by residues 33 to 37 (DHQYD), 83 to 84 (SL), and Glu117. Lys119 functions as the N6-AMP-lysine intermediate in the catalytic mechanism. Residues Arg140, Glu175, Lys282, and Lys306 each contribute to the NAD(+) site. 4 residues coordinate Zn(2+): Cys400, Cys403, Cys418, and Cys424. The region spanning 592–673 (RGSSAISGKT…WVKMVEDARS (82 aa)) is the BRCT domain.

It belongs to the NAD-dependent DNA ligase family. LigA subfamily. It depends on Mg(2+) as a cofactor. The cofactor is Mn(2+).

It catalyses the reaction NAD(+) + (deoxyribonucleotide)n-3'-hydroxyl + 5'-phospho-(deoxyribonucleotide)m = (deoxyribonucleotide)n+m + AMP + beta-nicotinamide D-nucleotide.. Functionally, DNA ligase that catalyzes the formation of phosphodiester linkages between 5'-phosphoryl and 3'-hydroxyl groups in double-stranded DNA using NAD as a coenzyme and as the energy source for the reaction. It is essential for DNA replication and repair of damaged DNA. The protein is DNA ligase of Anaplasma marginale (strain St. Maries).